A 345-amino-acid chain; its full sequence is MTIDNYDNSKQDSSKYEVSGTGDGRNGDGGLPLVQCVARARIPTTQGPDIFLHLYSNNRDNKEHLAIVFGEDIRSRSLFRRRQCETQQDRMIRGAYIGKLYPGRTVADEDDRLGLALEFDDSTGELLASKATTWDAHNDTLVRIHSECYTGENAWSARCDCGEQFDRAGRLIACDHEPTSNIKGGNGHGVIVYLRQEGRGIGLGEKLKAYNLQDLGADTVQANLMLKHPVDARDFSLGKAILLDLGIGNVRLLTNNPEKIKQVDHAPYLKCVERVPMVPIHWTNSSEGIDSKEIEGYLRTKIERMGHLLTEPLKLHTNPQPTETSEAQNQNRMNSALSSTSTLAI.

Residues 1–27 (MTIDNYDNSKQDSSKYEVSGTGDGRNG) are disordered. GTP is bound at residue 143–147 (RIHSE). Residues Cys148, Cys159, and Cys161 each contribute to the Zn(2+) site. GTP-binding positions include Gln164, 197–199 (EGR), and Thr219. Catalysis depends on Asp231, which acts as the Proton acceptor. Arg233 acts as the Nucleophile in catalysis. GTP is bound by residues Thr254 and Lys259. The interval 312–345 (PLKLHTNPQPTETSEAQNQNRMNSALSSTSTLAI) is disordered. Polar residues predominate over residues 317-345 (TNPQPTETSEAQNQNRMNSALSSTSTLAI).

Belongs to the GTP cyclohydrolase II family. It depends on Zn(2+) as a cofactor.

The catalysed reaction is GTP + 4 H2O = 2,5-diamino-6-hydroxy-4-(5-phosphoribosylamino)-pyrimidine + formate + 2 phosphate + 3 H(+). Its pathway is cofactor biosynthesis; riboflavin biosynthesis; 5-amino-6-(D-ribitylamino)uracil from GTP: step 1/4. In terms of biological role, catalyzes the conversion of GTP to 2,5-diamino-6-ribosylamino-4(3H)-pyrimidinone 5'-phosphate (DARP), formate and pyrophosphate. The polypeptide is GTP cyclohydrolase-2 (RIB1) (Saccharomyces cerevisiae (strain ATCC 204508 / S288c) (Baker's yeast)).